Consider the following 804-residue polypeptide: Protein-lysine N-methyltransferase SMYD4 (804 aa).

112–114 (RSA) serves as a coordination point for S-adenosyl-L-methionine. The SET domain occupies 233 to 574 (SSVGLCIDPL…KGQEILHCYG (342 aa)). Residues cysteine 296, cysteine 299, cysteine 309, cysteine 312, cysteine 318, cysteine 322, histidine 331, and cysteine 335 each coordinate Zn(2+). Residues 296–335 (CHRCLKHTLATVPCDGCSYAKYCSQECLQQAWELYHRTEC) form an MYND-type zinc finger. S-adenosyl-L-methionine contacts are provided by residues asparagine 427, 539 to 540 (NH), tyrosine 573, and phenylalanine 595.

This sequence belongs to the class V-like SAM-binding methyltransferase superfamily. As to quaternary structure, interacts (via MYND-type zinc finger) with HDAC1.

The protein resides in the nucleus. It is found in the cytoplasm. The catalysed reaction is L-lysyl-[protein] + S-adenosyl-L-methionine = N(6)-methyl-L-lysyl-[protein] + S-adenosyl-L-homocysteine + H(+). Protein-lysine N-methyltransferase. Monomethylates PRMT5, modulating its transcriptional activity. May also act as a histone methyltransferase. Plays a critical role in cardiac development. Acts as a key epigenetic regulator of gene expression during cardiac development via its dual activities as a methyltransferase and negative regulator of HDAC1. The polypeptide is Protein-lysine N-methyltransferase SMYD4 (SMYD4) (Pongo abelii (Sumatran orangutan)).